The sequence spans 121 residues: Large ribosomal subunit protein uL18 (121 aa).

Belongs to the universal ribosomal protein uL18 family. In terms of assembly, part of the 50S ribosomal subunit; part of the 5S rRNA/L5/L18/L25 subcomplex. Contacts the 5S and 23S rRNAs.

This is one of the proteins that bind and probably mediate the attachment of the 5S RNA into the large ribosomal subunit, where it forms part of the central protuberance. This chain is Large ribosomal subunit protein uL18, found in Anaplasma phagocytophilum (strain HZ).